The primary structure comprises 46 residues: Iota-conotoxin-like R11.7 (46 aa).

P2 and P11 each carry 4-hydroxyproline. 4 cysteine pairs are disulfide-bonded: C5/C19, C12/C22, C18/C27, and C21/C38. P29 carries the 4-hydroxyproline modification. F44 bears the D-phenylalanine mark.

This sequence belongs to the conotoxin I1 superfamily. Expressed by the venom duct.

The protein localises to the secreted. In terms of biological role, iota-conotoxins bind to voltage-gated sodium channels (Nav) and act as agonists by shifting the voltage-dependence of activation to more hyperpolarized levels. Produces general excitatory symptoms. The protein is Iota-conotoxin-like R11.7 of Conus radiatus (Rayed cone).